We begin with the raw amino-acid sequence, 306 residues long: UDP-3-O-acyl-N-acetylglucosamine deacetylase (306 aa).

H79, H238, and D242 together coordinate Zn(2+). H265 (proton donor) is an active-site residue.

Belongs to the LpxC family. Zn(2+) serves as cofactor.

The catalysed reaction is a UDP-3-O-[(3R)-3-hydroxyacyl]-N-acetyl-alpha-D-glucosamine + H2O = a UDP-3-O-[(3R)-3-hydroxyacyl]-alpha-D-glucosamine + acetate. Its pathway is glycolipid biosynthesis; lipid IV(A) biosynthesis; lipid IV(A) from (3R)-3-hydroxytetradecanoyl-[acyl-carrier-protein] and UDP-N-acetyl-alpha-D-glucosamine: step 2/6. In terms of biological role, catalyzes the hydrolysis of UDP-3-O-myristoyl-N-acetylglucosamine to form UDP-3-O-myristoylglucosamine and acetate, the committed step in lipid A biosynthesis. The protein is UDP-3-O-acyl-N-acetylglucosamine deacetylase of Shewanella sp. (strain ANA-3).